A 382-amino-acid polypeptide reads, in one-letter code: Enoyl-[acyl-carrier-protein] reductase, mitochondrial (382 aa).

The N-terminal 17 residues, 1–17 (MSSFLSKRFLSFSQRAM), are a transit peptide targeting the mitochondrion. Catalysis depends on Tyr77, which acts as the Proton donor. Residues Asn159, 187-190 (TSSV), 210-212 (RDR), 285-288 (YGGM), 310-312 (FWV), and Lys375 contribute to the NADP(+) site.

The protein belongs to the zinc-containing alcohol dehydrogenase family. Quinone oxidoreductase subfamily. Homodimer.

The protein resides in the mitochondrion matrix. The catalysed reaction is a 2,3-saturated acyl-[ACP] + NADP(+) = a (2E)-enoyl-[ACP] + NADPH + H(+). Its function is as follows. Catalyzes the NADPH-dependent reduction of trans-2-enoyl thioesters in mitochondrial fatty acid synthesis (fatty acid synthesis type II). Fatty acid chain elongation in mitochondria uses acyl carrier protein (ACP) as an acyl group carrier, but the enzyme accepts both ACP and CoA thioesters as substrates in vitro. Required for respiration and the maintenance of the mitochondrial compartment. This chain is Enoyl-[acyl-carrier-protein] reductase, mitochondrial (ETR1), found in Kluyveromyces lactis (strain ATCC 8585 / CBS 2359 / DSM 70799 / NBRC 1267 / NRRL Y-1140 / WM37) (Yeast).